A 700-amino-acid polypeptide reads, in one-letter code: AP-1-like transcription factor yap1 (700 aa).

2 disordered regions span residues 17–185 (SPGH…KDLE) and 228–296 (MPVN…VSLR). Residues 34–41 (MPVPGRDT) carry the Bipartite nuclear localization signal motif. Residues 47-59 (PSVSNGSQPSAHQ) are compositionally biased toward polar residues. A Bipartite nuclear localization signal motif is present at residues 67-74 (SPTPEMPP). Over residues 103–112 (LDDDDDDASD) the composition is skewed to acidic residues. Low complexity predominate over residues 127–138 (AGRAAAASASGS). The segment covering 150 to 185 (GDGKRELSKSERRKEQNRAAQKAFRERREAKVKDLE) has biased composition (basic and acidic residues). The 64-residue stretch at 156–219 (LSKSERRKEQ…KRLQEENVAL (64 aa)) folds into the bZIP domain. Residues 158–182 (KSERRKEQNRAAQKAFRERREAKVK) are basic motif. Residues 184 to 191 (LEDKVAEL) are leucine-zipper. 2 transcription activation regions span residues 213 to 400 (QEEN…QPDS) and 452 to 577 (LGAT…GRGN). The segment covering 231–244 (NSRNSPNSNNGSFS) has biased composition (low complexity). Positions 280–296 (SANTISDNSSESLVSLR) are enriched in polar residues. A n-CRD region spans residues 306-318 (FSDHFNTYALGVV). 2 disordered regions span residues 320–359 (VPPP…PSAD) and 542–609 (NYLN…KATT). Low complexity-rich tracts occupy residues 335–358 (SASN…PPSA) and 542–573 (NYLN…NVSS). The span at 589 to 607 (MGSSRTSVSHDSTDLQGKA) shows a compositional bias: polar residues. The tract at residues 642–675 (PSELWMRFGMQHENSTEHLLIDDLCDQMRAKATC) is c-CRD. The short motif at 660–667 (LLIDDLCD) is the Nuclear export signal element. A disulfide bridge connects residues cysteine 666 and cysteine 675.

This sequence belongs to the bZIP family. YAP subfamily. In terms of processing, depending on the oxidative stress inducing agent, yap1 can undergo two distinct conformational changes, both involving disulfide bond formation, and both masking the nuclear export signal, thus abolishing nuclear export.

Its subcellular location is the nucleus. It localises to the cytoplasm. Its function is as follows. Transcription activator involved in oxidative stress response and redox homeostasis. Regulates the transcription of genes encoding antioxidant enzymes and components of the cellular thiol-reducing pathways. Involved in antifungal resistance to fluconazole. In Cryptococcus neoformans var. grubii serotype A (strain H99 / ATCC 208821 / CBS 10515 / FGSC 9487) (Filobasidiella neoformans var. grubii), this protein is AP-1-like transcription factor yap1.